A 522-amino-acid polypeptide reads, in one-letter code: MLFSMVMFTERWWVGSKDCPRVPALENSNNPWRLERTATAAELSQYGNPTTCEIDNGGVIVADGFQASKGYTGDSIVDYNDAHYKTSVDQDAWGFVRAAYNRGRNTNRQSSGPHPLCTRKCIAWLLMGRLMNAVLTQSDNPALVPNQNATGSNSRPWKPLGKAQSYSNEELNNAPQFNPETLYASDTLIRFNGVNYISQSKEQKVSPSDSNPWRVFVDWTGTKERVGTPKKAWPKHVYAPYVDFTLNTIPDLRALAKNHNVNHFTLAFVVSKDANTTCGTAYGMQNYAQYSKIKALREAGGDVMLSIGGANNAPLAASCKNVDDLMQHYYDIVDNLNLKVLDFDIEGTWVAVQASIERRNLAVKKVQDKWKSEGKDIAIWYTLPILPTGLTPEGMNVLSDAKAKGVELAGVNVMTMDYGNAICQSANTEGQNIHGKCATSAIAFLHSQLKGLHPNKSDAEIDAMMGTTPMVGVNDVQGEVFYLSDARLVMQDAQKRNLGMVGIWSIARDLPAALTCLRNSTA.

A signal peptide spans 1–24; the sequence is MLFSMVMFTERWWVGSKDCPRVPA. N-linked (GlcNAc...) asparagine glycans are attached at residues N148 and N275. One can recognise a GH18 domain in the interval 235–522; it reads KHVYAPYVDF…ALTCLRNSTA (288 aa). E346 (proton donor) is an active-site residue. N-linked (GlcNAc...) asparagine glycosylation is found at N455 and N519.

It belongs to the glycosyl hydrolase 18 family. Chitinase class V subfamily.

It is found in the secreted. The enzyme catalyses Random endo-hydrolysis of N-acetyl-beta-D-glucosaminide (1-&gt;4)-beta-linkages in chitin and chitodextrins.. Functionally, secreted chitinase involved in the degradation of chitin, a component of the cell walls of fungi and exoskeletal elements of some animals (including worms and arthropods). Participates in the infection process and directly acts in the penetration process of the host cuticle. This Metarhizium anisopliae (Entomophthora anisopliae) protein is Endochitinase 11 (chi11).